The chain runs to 245 residues: Nisin immunity protein (245 aa).

The signal sequence occupies residues 1 to 19 (MRRYLILIVALIGITGLSG). Cysteine 20 carries N-palmitoyl cysteine lipidation. Cysteine 20 carries S-diacylglycerol cysteine lipidation.

Its subcellular location is the cell membrane. Functionally, involved in immunity against exogenously supplied nisin. This Lactococcus lactis subsp. lactis (Streptococcus lactis) protein is Nisin immunity protein (nisI).